The following is a 282-amino-acid chain: Ribosomal RNA small subunit methyltransferase A (282 aa).

His15, Leu17, Gly42, Glu64, Asp89, and Asn109 together coordinate S-adenosyl-L-methionine.

This sequence belongs to the class I-like SAM-binding methyltransferase superfamily. rRNA adenine N(6)-methyltransferase family. RsmA subfamily.

Its subcellular location is the cytoplasm. The catalysed reaction is adenosine(1518)/adenosine(1519) in 16S rRNA + 4 S-adenosyl-L-methionine = N(6)-dimethyladenosine(1518)/N(6)-dimethyladenosine(1519) in 16S rRNA + 4 S-adenosyl-L-homocysteine + 4 H(+). Functionally, specifically dimethylates two adjacent adenosines (A1518 and A1519) in the loop of a conserved hairpin near the 3'-end of 16S rRNA in the 30S particle. May play a critical role in biogenesis of 30S subunits. The sequence is that of Ribosomal RNA small subunit methyltransferase A from Prochlorococcus marinus (strain MIT 9211).